A 1045-amino-acid polypeptide reads, in one-letter code: Suppression of tumorigenicity 18 protein (1045 aa).

Disordered stretches follow at residues 38 to 90 (KKRR…NDHA), 158 to 228 (KAES…YNRK), and 340 to 364 (PRVT…RREA). Residues 52 to 63 (NKRKSLLMKPRH) show a composition bias toward basic residues. Basic and acidic residues-rich tracts occupy residues 69-90 (GCKE…NDHA) and 159-177 (AESD…NGRD). 6 consecutive CCHHC-type zinc fingers follow at residues 357–400 (PRPE…PLEI), 401–444 (LAMH…KLAM), 713–756 (RDLK…LKSL), 757–800 (MAAN…GIKM), 805–848 (EEKE…QKEN), and 858–901 (KLNK…IKKV). Zn(2+)-binding residues include Cys366, Cys371, His384, Cys390, Cys410, Cys415, His428, Cys434, Cys722, Cys727, His740, Cys746, Cys766, Cys771, His784, Cys790, Cys814, Cys819, His832, Cys838, Cys867, Cys872, His885, and Cys891. Residues 918 to 987 (IDGDEEIRHL…KELAGLSQAL (70 aa)) are a coiled coil.

The protein belongs to the MYT1 family.

The protein resides in the nucleus. In terms of biological role, repressor that binds to DNA sequences containing a bipartite element consisting of a direct repeat of the sequence 5'-AAAGTTT-3' separated by 2-9 nucleotides. Represses basal transcription activity from target promoters. In Mus musculus (Mouse), this protein is Suppression of tumorigenicity 18 protein (St18).